Consider the following 273-residue polypeptide: Putative pyruvate, phosphate dikinase regulatory protein (273 aa).

153–160 (GVSRTSKS) is an ADP binding site.

The protein belongs to the pyruvate, phosphate/water dikinase regulatory protein family. PDRP subfamily.

The enzyme catalyses N(tele)-phospho-L-histidyl/L-threonyl-[pyruvate, phosphate dikinase] + ADP = N(tele)-phospho-L-histidyl/O-phospho-L-threonyl-[pyruvate, phosphate dikinase] + AMP + H(+). It catalyses the reaction N(tele)-phospho-L-histidyl/O-phospho-L-threonyl-[pyruvate, phosphate dikinase] + phosphate + H(+) = N(tele)-phospho-L-histidyl/L-threonyl-[pyruvate, phosphate dikinase] + diphosphate. Functionally, bifunctional serine/threonine kinase and phosphorylase involved in the regulation of the pyruvate, phosphate dikinase (PPDK) by catalyzing its phosphorylation/dephosphorylation. The protein is Putative pyruvate, phosphate dikinase regulatory protein of Ehrlichia chaffeensis (strain ATCC CRL-10679 / Arkansas).